The primary structure comprises 182 residues: MSKKIMATQKVVIASLNPAKINAVKSAFQSAFPQQVFEFVGISVPSEVADQPMTNEETHRGALNRVKNAKLEMPTADFYVGLEAGIEGNVTFAWMVIESDTHRGESRSASLMLPPEVLAQLADANELGDVMDKVFGTENIKQKGGAISLLTQNQLTRSSVYHQALILALIPFTNPDHFPANL.

It belongs to the YjjX NTPase family. As to quaternary structure, homodimer. It depends on Mg(2+) as a cofactor. Mn(2+) serves as cofactor.

The catalysed reaction is XTP + H2O = XDP + phosphate + H(+). It carries out the reaction ITP + H2O = IDP + phosphate + H(+). Phosphatase that hydrolyzes non-canonical purine nucleotides such as XTP and ITP to their respective diphosphate derivatives. Probably excludes non-canonical purines from DNA/RNA precursor pool, thus preventing their incorporation into DNA/RNA and avoiding chromosomal lesions. In Vibrio parahaemolyticus serotype O3:K6 (strain RIMD 2210633), this protein is Inosine/xanthosine triphosphatase.